The primary structure comprises 160 residues: Thialysine N-epsilon-acetyltransferase (160 aa).

The region spanning 4 to 159 (FEIVTVTPDH…DGAAINKFAD (156 aa)) is the N-acetyltransferase domain. Residues 84-86 (LYI), 92-97 (RMGLAR), 123-126 (NKNA), and 130-133 (YDTV) contribute to the acetyl-CoA site.

Belongs to the acetyltransferase family. Homodimer.

It carries out the reaction S-(2-aminoethyl)-L-cysteine + acetyl-CoA = S-(2-acetamidoethyl)-L-cysteine + CoA + H(+). The catalysed reaction is O-(2-aminoethyl)-L-serine + acetyl-CoA = O-(2-acetamidoethyl)-L-serine + CoA + H(+). The enzyme catalyses S-(2-aminoethyl)-homocysteine + acetyl-CoA = S-(2-acetamidoethyl)-homocysteine + CoA + H(+). Functionally, catalyzes the N-acetylation of the amino acid thialysine (S-(2-aminoethyl)-L-cysteine), a L-lysine analog with the 4-methylene group substituted with a sulfur. Substrate specificity: thialysine &gt; O-(2-aminoethyl)-L-serine &gt; S-(2-aminoethyl)-D,L-homocysteine. Does not act on polyamines, such as spermidine and spermine, nor on diamines putrescine and cadaverine. This chain is Thialysine N-epsilon-acetyltransferase, found in Caenorhabditis elegans.